A 51-amino-acid polypeptide reads, in one-letter code: Large ribosomal subunit protein bL33 (51 aa).

Positions Met-1 to Lys-21 are disordered.

It belongs to the bacterial ribosomal protein bL33 family.

This chain is Large ribosomal subunit protein bL33, found in Neisseria gonorrhoeae (strain ATCC 700825 / FA 1090).